The chain runs to 730 residues: Guanylate cyclase soluble subunit alpha-2 (730 aa).

The disordered stretch occupies residues 1–53 (MSRRKISSESFSSLGSDYLETSPEEEGECPLSKLCWNGSRSPPGPPGSRAAAM). The Guanylate cyclase domain occupies 519–646 (TMLFSDIVGF…NNVTLASKFE (128 aa)).

It belongs to the adenylyl cyclase class-4/guanylyl cyclase family. Heterodimer of an alpha and a beta chain.

It localises to the cytoplasm. The catalysed reaction is GTP = 3',5'-cyclic GMP + diphosphate. Activated by nitric oxide in the presence of magnesium or manganese ions. Has guanylyl cyclase on binding to the beta-1 subunit. This Rattus norvegicus (Rat) protein is Guanylate cyclase soluble subunit alpha-2 (Gucy1a2).